Consider the following 684-residue polypeptide: Cleavage and polyadenylation specificity factor subunit 3 (684 aa).

Serine 2 bears the N-acetylserine mark. Residues histidine 71, histidine 73, aspartate 75, histidine 76, histidine 158, and aspartate 179 each coordinate Zn(2+). The Proton donor role is filled by histidine 396. Histidine 418 contributes to the Zn(2+) binding site. Glycyl lysine isopeptide (Lys-Gly) (interchain with G-Cter in SUMO) cross-links involve residues lysine 462, lysine 465, and lysine 545. Serine 659 is subject to Phosphoserine. Threonine 681 is modified (phosphothreonine).

Belongs to the metallo-beta-lactamase superfamily. RNA-metabolizing metallo-beta-lactamase-like family. CPSF3 subfamily. In terms of assembly, component of the cleavage and polyadenylation specificity factor (CPSF) complex, composed of CPSF1, CPSF2, CPSF3, CPSF4 and FIP1L1. Interacts with CPSF2, CSTF2 and SYMPK. Interacts with TUT1; the interaction is direct and mediates the recruitment of the CPSF complex on the 3'UTR of pre-mRNAs. Interacts with WDR33. Interacts with ZC3H3. Interacts with ISY1; this interaction is in an RNA independent manner. Interacts with the microprocessor complex subunits DGCR8 and DROSHA; this interaction is in an RNA dependent manner. Requires Zn(2+) as cofactor. Sumoylated on Lys-462, Lys-465 and Lys-545, preferentially by SUMO3.

Its subcellular location is the nucleus. Component of the cleavage and polyadenylation specificity factor (CPSF) complex that plays a key role in pre-mRNA 3'-end formation, recognizing the AAUAAA signal sequence and interacting with poly(A) polymerase and other factors to bring about cleavage and poly(A) addition. Has endonuclease activity, and functions as an mRNA 3'-end-processing endonuclease. Also involved in the histone 3'-end pre-mRNA processing. U7 snRNP-dependent protein that induces both the 3' endoribonucleolytic cleavage of histone pre-mRNAs and acts as a 5' to 3' exonuclease for degrading the subsequent downstream cleavage product (DCP) of mature histone mRNAs. Cleavage occurs after the 5'-ACCCA-3' sequence in the histone pre-mRNA leaving a 3'hydroxyl group on the upstream fragment containing the stem loop (SL) and 5' phosphate on the downstream cleavage product (DCP) starting with CU nucleotides. The U7-dependent 5' to 3' exonuclease activity is processive and degrades the DCP RNA substrate even after complete removal of the U7-binding site. Binds to the downstream cleavage product (DCP) of histone pre-mRNAs and the cleaved DCP RNA substrate in a U7 snRNP dependent manner. Required for the selective processing of microRNAs (miRNAs) during embryonic stem cell differentiation via its interaction with ISY1. Required for entering/progressing through S-phase of the cell cycle. Required for the biogenesis of all miRNAs from the pri-miR-17-92 primary transcript except miR-92a. Only required for the biogenesis of miR-290 and miR-96 from the pri-miR-290-295 and pri-miR-96-183 primary transcripts, respectively. The sequence is that of Cleavage and polyadenylation specificity factor subunit 3 (Cpsf3) from Mus musculus (Mouse).